A 445-amino-acid chain; its full sequence is Sporulation-specific glucan 1,3-beta-glucosidase (445 aa).

A signal peptide spans 1-21; it reads MVSFRGLTTLTLLFTKLVNCN. Residue N201 is glycosylated (N-linked (GlcNAc...) asparagine). Residue E233 is the Proton donor of the active site. E335 acts as the Nucleophile in catalysis.

The protein belongs to the glycosyl hydrolase 5 (cellulase A) family.

The protein resides in the secreted. The catalysed reaction is Successive hydrolysis of beta-D-glucose units from the non-reducing ends of (1-&gt;3)-beta-D-glucans, releasing alpha-glucose.. Probably involved in the processes of spore formation and contributes to ascospore thermoresistance by participating in the morphogenesis of ascospore walls. The enzyme may do this by modifying glucan linkages in the developing ascospore wall, thus strengthening it or lending it plasticity. The protein is Sporulation-specific glucan 1,3-beta-glucosidase (SPR1) of Saccharomyces cerevisiae (strain ATCC 204508 / S288c) (Baker's yeast).